The following is a 194-amino-acid chain: Mediator of RNA polymerase II transcription subunit 8 (194 aa).

This sequence belongs to the Mediator complex subunit 8 family. Component of the Mediator complex.

It localises to the nucleus. Component of the Mediator complex, a coactivator involved in the regulated transcription of nearly all RNA polymerase II-dependent genes. Mediator functions as a bridge to convey information from gene-specific regulatory proteins to the basal RNA polymerase II transcription machinery. Mediator is recruited to promoters by direct interactions with regulatory proteins and serves as a scaffold for the assembly of a functional preinitiation complex with RNA polymerase II and the general transcription factors. The sequence is that of Mediator of RNA polymerase II transcription subunit 8 (MED8) from Yarrowia lipolytica (strain CLIB 122 / E 150) (Yeast).